The sequence spans 320 residues: tRNA U34 carboxymethyltransferase (320 aa).

Residues Lys-89, Trp-103, Lys-108, Gly-128, Asp-150–Thr-152, Leu-179–Glu-180, Met-194, Tyr-198, and Arg-313 contribute to the carboxy-S-adenosyl-L-methionine site.

It belongs to the class I-like SAM-binding methyltransferase superfamily. CmoB family. Homotetramer.

The enzyme catalyses carboxy-S-adenosyl-L-methionine + 5-hydroxyuridine(34) in tRNA = 5-carboxymethoxyuridine(34) in tRNA + S-adenosyl-L-homocysteine + H(+). In terms of biological role, catalyzes carboxymethyl transfer from carboxy-S-adenosyl-L-methionine (Cx-SAM) to 5-hydroxyuridine (ho5U) to form 5-carboxymethoxyuridine (cmo5U) at position 34 in tRNAs. The sequence is that of tRNA U34 carboxymethyltransferase from Haemophilus ducreyi (strain 35000HP / ATCC 700724).